Reading from the N-terminus, the 756-residue chain is Ent-kaur-16-ene synthase, chloroplastic (756 aa).

Mg(2+) contacts are provided by D496, D500, N639, and E647. A DDXXD motif motif is present at residues 496-500 (DDFFD).

This sequence belongs to the terpene synthase family. Requires Mg(2+) as cofactor. As to expression, highly expressed in panicles and at lower levels in leaves and stems.

It localises to the plastid. The protein resides in the chloroplast. It catalyses the reaction ent-copalyl diphosphate = ent-kaur-16-ene + diphosphate. Its pathway is plant hormone biosynthesis; gibberellin biosynthesis. Catalyzes the conversion of ent-copalyl diphosphate to the gibberellin precursor ent-kaur-16-ene. The chain is Ent-kaur-16-ene synthase, chloroplastic (KS1) from Oryza sativa subsp. japonica (Rice).